A 757-amino-acid chain; its full sequence is Cell cycle progression protein 1 (757 aa).

Residues 1–217 (MSENSSDSDS…KRQFSSGLNK (217 aa)) lie on the Cytoplasmic side of the membrane. The segment at 1-308 (MSENSSDSDS…QKTNLATENQ (308 aa)) is interaction with MCF2L and SRC. The tract at residues 152–207 (VFSSQPSDDESSSDETSNQPSPAFRRRRARKKTVSASESEDRLVAEQETEPSKELS) is disordered. Basic residues predominate over residues 175-184 (FRRRRARKKT). S186 bears the Phosphoserine mark. Basic and acidic residues predominate over residues 190-207 (SEDRLVAEQETEPSKELS). A helical; Signal-anchor for type II membrane protein transmembrane segment spans residues 218–238 (CVILALVIAISMGFGHFYGTI). Over 239-757 (QIQKRQQLVR…YIKPCHYSSL (519 aa)) the chain is Lumenal. Coiled-coil stretches lie at residues 248–272 (RKIHEDELNDMKDYLSQCQQEQESF) and 306–450 (ENQY…LWER). Residues 458–468 (QNGKQGTDGKK) show a composition bias toward basic and acidic residues. Residues 458-483 (QNGKQGTDGKKKGGRGSHRAKNKSKE) form a disordered region. Residues 469-479 (KGGRGSHRAKN) show a composition bias toward basic residues. Positions 504–530 (VRHHKEKIKQAKEAVKENLKKFSDSVK) form a coiled coil.

The protein belongs to the CCPG1 family. As to quaternary structure, interacts with MCF2L. May interact with MCF2, ARHGEF1, BCR, VAV1 and FGD1, but not with TIAM1. Interacts with GTP-bound CDC42 and SRC.

It is found in the cytoplasmic granule membrane. Acts as an assembly platform for Rho protein signaling complexes. Limits guanine nucleotide exchange activity of MCF2L toward RHOA, which results in an inhibition of both its transcriptional activation ability and its transforming activity. Does not inhibit activity of MCF2L toward CDC42, or activity of MCF2 toward either RHOA or CDC42. May be involved in cell cycle regulation. This chain is Cell cycle progression protein 1 (CCPG1), found in Homo sapiens (Human).